The sequence spans 498 residues: MATNYNEKLLLNYVPVYVMLPLGVVNVENVFADPETLETQLKRLKEEAGVDGVMVDVWWGIIESKGPKQYDWTAYKTLFQLIARLGLKIQAIMSFHQCGGNVGDIVTIPIPQWVRDVGDNDPDIYYTNRKGTRDIEYLSIGVDNLPLFAGRTAVQLYSDYMSSFKENMADLIEAGVIVDIEVGLGPAGELRYPSYPQSQGWVFPGIGEFQCYDKYLKKDFKEAAAKAGHPEWDLPEDAGEYNDKPEETGFFKKDGTYVSEKGKFFMTWYSNKLIFHGDQILGEANKIFAGLKVNLAAKVSGIHWLYNHHSHAAELTAGYYNLFKRDGYRPIARMLSKHYGILNFTCLEMKDTDNTAEALSAPQELVQEVLSKAWKEGIEVAGENALETYGAKGYNQILLNARPNGVNPNGKPKLRMYGFTYLRLSDTVFQENNFELFKKLVRKMHADQDYCGDAAKYGHEIVPLKTSNSQLTLEDIADAAQPSGAFKWDSETDLKVDG.

Substrate contacts are provided by aspartate 56, histidine 96, and aspartate 104. The active-site Proton donor is the glutamate 189. Residues lysine 298, histidine 303, and threonine 345 each contribute to the substrate site. Glutamate 383 functions as the Proton acceptor in the catalytic mechanism. Substrate contacts are provided by residues 384–385 (NA) and arginine 423.

Belongs to the glycosyl hydrolase 14 family. Detected in phloem sieve elements.

It is found in the cytoplasm. It carries out the reaction Hydrolysis of (1-&gt;4)-alpha-D-glucosidic linkages in polysaccharides so as to remove successive maltose units from the non-reducing ends of the chains.. In terms of biological role, beta-amylase activity. Major cytosolic beta-amylase isoform in rosette leaves and inflorescences stems. In Arabidopsis thaliana (Mouse-ear cress), this protein is Beta-amylase 5 (BAM5).